The sequence spans 215 residues: LexA repressor (215 aa).

The H-T-H motif DNA-binding region spans 28–48; that stretch reads RAEIAAELGFSSPNAAEEHLR. Residues Ser133 and Lys170 each act as for autocatalytic cleavage activity in the active site.

It belongs to the peptidase S24 family. In terms of assembly, homodimer.

The catalysed reaction is Hydrolysis of Ala-|-Gly bond in repressor LexA.. Represses a number of genes involved in the response to DNA damage (SOS response), including recA and lexA. In the presence of single-stranded DNA, RecA interacts with LexA causing an autocatalytic cleavage which disrupts the DNA-binding part of LexA, leading to derepression of the SOS regulon and eventually DNA repair. This Burkholderia mallei (strain NCTC 10247) protein is LexA repressor.